Here is a 289-residue protein sequence, read N- to C-terminus: MRILSSLILLIALAIALVSATRPVVLMHGVTTGKESMEPLKSWIEESIPDIYVLNVEIGNGAFDSIFTTMDSQIEEFAQVVQADPKLANGFNLIGFSQGTLIARAFVQRYNNPQVYNYISWNGPQGGQFGTPFVNIPWVDKVLGTIPYEKTIQKKLSVAEYWKDPHRIDKYLERSIFLADINNEYQVKNTTYKENLTKLNAMVLTYSTNDKTIIPKESGWFSFYADGSGTEVVPLQQQTQYSEDWLGLRTLDESNRLFFYTTTCTHRDHPIEDYCKPYFTNFTLPYLQN.

The N-terminal stretch at 1–20 (MRILSSLILLIALAIALVSA) is a signal peptide. The active site involves Ser-97. Asn-189 and Asn-195 each carry an N-linked (GlcNAc...) asparagine glycan. Residues Asp-210 and His-266 contribute to the active site. Asn-281 is a glycosylation site (N-linked (GlcNAc...) asparagine).

This sequence belongs to the palmitoyl-protein thioesterase family.

The protein localises to the lysosome. The catalysed reaction is S-hexadecanoyl-L-cysteinyl-[protein] + H2O = L-cysteinyl-[protein] + hexadecanoate + H(+). Its function is as follows. Removes thioester-linked fatty acyl groups such as palmitate from modified cysteine residues in proteins or peptides during lysosomal degradation. This Dictyostelium discoideum (Social amoeba) protein is Palmitoyl-protein thioesterase 3 (ppt3).